The following is a 187-amino-acid chain: Dihydrofolate reductase (187 aa).

In terms of domain architecture, DHFR spans 4–185 (PLNCIVAVSQ…IKYKFEVYEK (182 aa)). NADP(+) is bound by residues alanine 10 and 16-22 (GIGKNGD). Residue 31–36 (EFQYFQ) coordinates substrate. NADP(+) is bound at residue 55-57 (RKT). Arginine 71 provides a ligand contact to substrate. Residues 77–79 (SRE) and 117–124 (GGSSVYKE) contribute to the NADP(+) site.

It belongs to the dihydrofolate reductase family. As to quaternary structure, homodimer.

It is found in the mitochondrion. The protein localises to the cytoplasm. It catalyses the reaction (6S)-5,6,7,8-tetrahydrofolate + NADP(+) = 7,8-dihydrofolate + NADPH + H(+). It participates in cofactor biosynthesis; tetrahydrofolate biosynthesis; 5,6,7,8-tetrahydrofolate from 7,8-dihydrofolate: step 1/1. Functionally, key enzyme in folate metabolism. Contributes to the de novo mitochondrial thymidylate biosynthesis pathway. Catalyzes an essential reaction for de novo glycine and purine synthesis, and for DNA precursor synthesis. Binds its own mRNA and that of DHFR2. This chain is Dihydrofolate reductase (DHFR), found in Bos taurus (Bovine).